Reading from the N-terminus, the 126-residue chain is uncharacterized protein (126 aa).

Residues 3 to 23 traverse the membrane as a helical segment; it reads NMIVLIIFAAFIIYMIASYVY. In terms of domain architecture, Rhodanese spans 39 to 123; it reads GYRKAQLIDV…GFKKWGGKIK (85 aa).

It localises to the cell membrane. This is an uncharacterized protein from Bacillus subtilis (strain 168).